The following is a 694-amino-acid chain: Elongation factor G (694 aa).

The region spanning 6-288 (KLYRNIGIAA…GVIEYLPSPT (283 aa)) is the tr-type G domain. GTP-binding positions include 15-22 (AHVDAGKT), 86-90 (DTPGH), and 140-143 (NKMD).

Belongs to the TRAFAC class translation factor GTPase superfamily. Classic translation factor GTPase family. EF-G/EF-2 subfamily.

It is found in the cytoplasm. In terms of biological role, catalyzes the GTP-dependent ribosomal translocation step during translation elongation. During this step, the ribosome changes from the pre-translocational (PRE) to the post-translocational (POST) state as the newly formed A-site-bound peptidyl-tRNA and P-site-bound deacylated tRNA move to the P and E sites, respectively. Catalyzes the coordinated movement of the two tRNA molecules, the mRNA and conformational changes in the ribosome. The sequence is that of Elongation factor G from Legionella pneumophila (strain Corby).